Here is a 513-residue protein sequence, read N- to C-terminus: Histidine ammonia-lyase (513 aa).

The 5-imidazolinone (Ala-Gly) cross-link spans 145 to 147; sequence ASG. Ser-146 is modified (2,3-didehydroalanine (Ser)).

The protein belongs to the PAL/histidase family. Contains an active site 4-methylidene-imidazol-5-one (MIO), which is formed autocatalytically by cyclization and dehydration of residues Ala-Ser-Gly.

The protein resides in the cytoplasm. The catalysed reaction is L-histidine = trans-urocanate + NH4(+). The protein operates within amino-acid degradation; L-histidine degradation into L-glutamate; N-formimidoyl-L-glutamate from L-histidine: step 1/3. The sequence is that of Histidine ammonia-lyase from Vibrio vulnificus (strain CMCP6).